A 129-amino-acid polypeptide reads, in one-letter code: Ribosome-binding factor A (129 aa).

It belongs to the RbfA family. As to quaternary structure, monomer. Binds 30S ribosomal subunits, but not 50S ribosomal subunits or 70S ribosomes.

It localises to the cytoplasm. One of several proteins that assist in the late maturation steps of the functional core of the 30S ribosomal subunit. Associates with free 30S ribosomal subunits (but not with 30S subunits that are part of 70S ribosomes or polysomes). Required for efficient processing of 16S rRNA. May interact with the 5'-terminal helix region of 16S rRNA. The sequence is that of Ribosome-binding factor A from Gloeobacter violaceus (strain ATCC 29082 / PCC 7421).